Here is a 100-residue protein sequence, read N- to C-terminus: Large ribosomal subunit protein uL23 (100 aa).

The protein belongs to the universal ribosomal protein uL23 family. In terms of assembly, part of the 50S ribosomal subunit. Contacts protein L29, and trigger factor when it is bound to the ribosome.

Functionally, one of the early assembly proteins it binds 23S rRNA. One of the proteins that surrounds the polypeptide exit tunnel on the outside of the ribosome. Forms the main docking site for trigger factor binding to the ribosome. The chain is Large ribosomal subunit protein uL23 from Prochlorococcus marinus (strain MIT 9215).